The following is a 349-amino-acid chain: Phosphoribosylformylglycinamidine cyclo-ligase (349 aa).

This sequence belongs to the AIR synthase family.

The protein resides in the cytoplasm. The catalysed reaction is 2-formamido-N(1)-(5-O-phospho-beta-D-ribosyl)acetamidine + ATP = 5-amino-1-(5-phospho-beta-D-ribosyl)imidazole + ADP + phosphate + H(+). It functions in the pathway purine metabolism; IMP biosynthesis via de novo pathway; 5-amino-1-(5-phospho-D-ribosyl)imidazole from N(2)-formyl-N(1)-(5-phospho-D-ribosyl)glycinamide: step 2/2. The sequence is that of Phosphoribosylformylglycinamidine cyclo-ligase from Methanococcus vannielii (strain ATCC 35089 / DSM 1224 / JCM 13029 / OCM 148 / SB).